The primary structure comprises 151 residues: MAKFEQKLTDLLRPAVEETGKTLHGIEYISAGNNSVLRLFIDHENGINVDDCAEVSRQVGAILDVEDPISSEYSLEVSSPGVDRPLFELAHFQEVIGETINVKISMPLNGRRKFKGPLVAIENDTLIVEVDSIDYELAISNIDKANLVAKF.

The protein belongs to the RimP family.

It localises to the cytoplasm. Functionally, required for maturation of 30S ribosomal subunits. In Colwellia psychrerythraea (strain 34H / ATCC BAA-681) (Vibrio psychroerythus), this protein is Ribosome maturation factor RimP.